The sequence spans 303 residues: N-acetyl-D-glucosamine kinase (303 aa).

ATP-binding positions include 4–11 and 133–140; these read GFDIGGTK and GVGGGLIF. The Zn(2+) site is built by His-157, Cys-177, Cys-179, and Cys-184.

It belongs to the ROK (NagC/XylR) family. NagK subfamily.

It carries out the reaction N-acetyl-D-glucosamine + ATP = N-acetyl-D-glucosamine 6-phosphate + ADP + H(+). It functions in the pathway cell wall biogenesis; peptidoglycan recycling. Its function is as follows. Catalyzes the phosphorylation of N-acetyl-D-glucosamine (GlcNAc) derived from cell-wall degradation, yielding GlcNAc-6-P. The chain is N-acetyl-D-glucosamine kinase from Shigella sonnei (strain Ss046).